Here is a 197-residue protein sequence, read N- to C-terminus: ATP-dependent Clp protease proteolytic subunit (197 aa).

The active-site Nucleophile is Ser-97. His-122 is a catalytic residue.

This sequence belongs to the peptidase S14 family. In terms of assembly, fourteen ClpP subunits assemble into 2 heptameric rings which stack back to back to give a disk-like structure with a central cavity, resembling the structure of eukaryotic proteasomes.

The protein localises to the cytoplasm. It carries out the reaction Hydrolysis of proteins to small peptides in the presence of ATP and magnesium. alpha-casein is the usual test substrate. In the absence of ATP, only oligopeptides shorter than five residues are hydrolyzed (such as succinyl-Leu-Tyr-|-NHMec, and Leu-Tyr-Leu-|-Tyr-Trp, in which cleavage of the -Tyr-|-Leu- and -Tyr-|-Trp bonds also occurs).. Functionally, cleaves peptides in various proteins in a process that requires ATP hydrolysis. Has a chymotrypsin-like activity. Plays a major role in the degradation of misfolded proteins. This is ATP-dependent Clp protease proteolytic subunit from Trichlorobacter lovleyi (strain ATCC BAA-1151 / DSM 17278 / SZ) (Geobacter lovleyi).